Reading from the N-terminus, the 483-residue chain is Cysteine proteinase 1, mitochondrial (483 aa).

Residues 1–30 (MLPTSVSWSLYLKTFRSHLLRAPQIVLKRM) constitute a mitochondrion transit peptide. Active-site residues include cysteine 102, histidine 398, and asparagine 421. Lysine 483 is a propeptide (removed in mature form; by autocatalysis).

The protein belongs to the peptidase C1 family. In terms of assembly, homohexamer. Binds to nucleic acids. Binds single-stranded DNA and RNA with higher affinity than double-stranded DNA. Post-translationally, the N-terminus of isoform Cytoplasmic is blocked.

It localises to the mitochondrion. The protein localises to the cytoplasm. The enzyme catalyses Inactivates bleomycin B2 (a cytotoxic glycometallopeptide) by hydrolysis of a carboxyamide bond of beta-aminoalanine, but also shows general aminopeptidase activity. The specificity varies somewhat with source, but amino acid arylamides of Met, Leu and Ala are preferred.. Inhibited by E64, a specific inhibitor of cysteine proteases, N-ethylmaleimide, iodacetamide, and mercury and zinc ions. In terms of biological role, the normal physiological role of the enzyme is unknown, but it is not essential for the viability of yeast cells. Has aminopeptidase activity, shortening substrate peptides sequentially by 1 amino acid. Has bleomycin hydrolase activity, which can protect the cell from the toxic effects of bleomycin. Has homocysteine-thiolactonase activity, protecting the cell against homocysteine toxicity. Acts as a repressor in the GAL4 regulatory system, but this does not require either the peptidase or nucleic acid-binding activities. This Saccharomyces cerevisiae (strain YJM789) (Baker's yeast) protein is Cysteine proteinase 1, mitochondrial (LAP3).